The primary structure comprises 1681 residues: Meiosis regulator and mRNA stability factor 1 (1681 aa).

The region spanning 340-477 (IGVFWDIENC…ALLHHAHELI (138 aa)) is the NYN domain. 2 disordered regions span residues 576-595 (VNET…PKKV) and 638-717 (QMQS…DVVF). Residues 638–647 (QMQSKSNKTS) show a composition bias toward polar residues. A compositionally biased stretch (basic and acidic residues) spans 648–658 (QQEKDKKRNGD). Polar residues predominate over residues 659 to 690 (KQGTLSQSSPLCTNQMLQTARNVGTDNTASKS). Basic and acidic residues predominate over residues 692-715 (QKRDDTTRKSNADSQKEQKNKEDV). Residues 779-858 (ADIQIGNLDY…KRIQVSLATG (80 aa)) form the RRM domain. HTH OST-type domains lie at 863–937 (SLSL…SPMG), 991–1067 (SLKT…HNKP), 1087–1161 (QLIQ…LTHR), 1163–1238 (QVKR…IPKR), 1247–1321 (RTKQ…LTEM), 1323–1398 (RIKA…INRK), 1399–1472 (SLRS…SVQL), and 1474–1548 (SLYV…LKND). Polar residues predominate over residues 1637–1648 (EPSTQNICPQES). The disordered stretch occupies residues 1637 to 1662 (EPSTQNICPQESKSTKELPESPVKRQ). Residues 1649–1659 (KSTKELPESPV) are compositionally biased toward basic and acidic residues.

It is found in the peroxisome. Its function is as follows. Essential regulator of oogenesis required for female meiotic progression to repress transposable elements and preventing their mobilization, which is essential for the germline integrity. In Xenopus tropicalis (Western clawed frog), this protein is Meiosis regulator and mRNA stability factor 1.